A 441-amino-acid polypeptide reads, in one-letter code: MFS-type transporter (441 aa).

A disordered region spans residues methionine 1 to isoleucine 47. The next 10 membrane-spanning stretches (helical) occupy residues threonine 61 to phenylalanine 81, aspartate 95 to glycine 115, leucine 125 to threonine 145, leucine 150 to valine 170, leucine 183 to alanine 203, phenylalanine 212 to valine 232, phenylalanine 259 to alanine 279, threonine 289 to glycine 309, leucine 323 to valine 343, and valine 351 to isoleucine 371. Residue asparagine 388 is glycosylated (N-linked (GlcNAc...) asparagine). 2 helical membrane passes run phenylalanine 389–alanine 409 and tyrosine 415–alanine 435.

The protein belongs to the major facilitator superfamily. Monocarboxylate porter (TC 2.A.1.13) family.

Its subcellular location is the membrane. In terms of biological role, MFS-type transporter; part of the gene cluster that mediates the biosynthesis of butenolide, a mycotoxin that shows antibiotic activity but does not seem to play a major role in the spread of head blight in wheat. The protein is MFS-type transporter of Gibberella zeae (strain ATCC MYA-4620 / CBS 123657 / FGSC 9075 / NRRL 31084 / PH-1) (Wheat head blight fungus).